A 294-amino-acid polypeptide reads, in one-letter code: Extracellular metalloprotease TRV_07111 (294 aa).

A signal peptide spans 1 to 19 (MRFSVVFAAIAALSSVVTA). Asparagine 49, asparagine 54, and asparagine 74 each carry an N-linked (GlcNAc...) asparagine glycan. Histidine 185 is a Zn(2+) binding site. Glutamate 186 is an active-site residue. Residue histidine 189 coordinates Zn(2+). A disulfide bridge links cysteine 224 with cysteine 250.

It belongs to the peptidase M43B family.

It is found in the secreted. Secreted metalloproteinase that allows assimilation of proteinaceous substrates. Plays a pivotal role as a pathogenicity determinant during infections and contributes to the ability of the pathogen to persist within the mammalian host. The protein is Extracellular metalloprotease TRV_07111 of Trichophyton verrucosum (strain HKI 0517).